Reading from the N-terminus, the 245-residue chain is Actin-like protein 10 (245 aa).

The protein belongs to the actin family.

The sequence is that of Actin-like protein 10 (ACTL10) from Homo sapiens (Human).